Reading from the N-terminus, the 460-residue chain is UDP-N-acetylmuramoylalanine--D-glutamate ligase (460 aa).

Glycine 120–threonine 126 contributes to the ATP binding site.

The protein belongs to the MurCDEF family.

The protein localises to the cytoplasm. It carries out the reaction UDP-N-acetyl-alpha-D-muramoyl-L-alanine + D-glutamate + ATP = UDP-N-acetyl-alpha-D-muramoyl-L-alanyl-D-glutamate + ADP + phosphate + H(+). The protein operates within cell wall biogenesis; peptidoglycan biosynthesis. Cell wall formation. Catalyzes the addition of glutamate to the nucleotide precursor UDP-N-acetylmuramoyl-L-alanine (UMA). This Lactobacillus delbrueckii subsp. bulgaricus (strain ATCC 11842 / DSM 20081 / BCRC 10696 / JCM 1002 / NBRC 13953 / NCIMB 11778 / NCTC 12712 / WDCM 00102 / Lb 14) protein is UDP-N-acetylmuramoylalanine--D-glutamate ligase.